The sequence spans 256 residues: Trypsin alpha (256 aa).

The first 22 residues, 1-22 (MLKIVILLSAVVCALGGTVPEG), serve as a signal peptide directing secretion. The propeptide at 23-30 (LLPQLDGR) is activation peptide. The 224-residue stretch at 31 to 254 (IVGGSATTIS…LRSWVVSTAN (224 aa)) folds into the Peptidase S1 domain. Cysteine 56 and cysteine 72 are joined by a disulfide. Catalysis depends on charge relay system residues histidine 71 and aspartate 116. Intrachain disulfides connect cysteine 180–cysteine 197 and cysteine 206–cysteine 230. The Charge relay system role is filled by serine 210.

It belongs to the peptidase S1 family. As to expression, synthesized in the midgut of both larvae and adults, primarily in the ventriculus and gastric caeca.

It is found in the secreted. It localises to the extracellular space. It carries out the reaction Preferential cleavage: Arg-|-Xaa, Lys-|-Xaa.. This chain is Trypsin alpha (alphaTry), found in Drosophila melanogaster (Fruit fly).